Consider the following 449-residue polypeptide: MKKGLTLDLSKTQAFVKDYELDYMEGMVKDSHDRLHSKTGQGNDFLGWIDLPVDYDKEEFARIKKAAEKIQSDSDVLIVIGIGGSYLGARAAIEMLTSNFHNVLDDNKRKVPKIFYAGNNISSTYMAELLEAIDGKDVSVNVISKSGTTTEPAIAFRIFKSYLEKKYGVEEARKRIYATTDKAKGALKGLADVEGYETFVIPDDVGGRFTVLTPVGLLPIAVAGINIDEMMQGAADAREAYSNPSLKENDCYKYAVTRNALYNKGKEIEVLVNYEPCIHYFNEWWKQLYGESEGKDKKGLFPAAVDFSTDLHSMGQYIQDGRRNLFETVINVEKARKEITIEFSEGDLDGLNFLTGKTMDFVNNKAFQGTLLAHNDGEVPNMVLNVPELSPYYFGHMVYFFEKACGISGYLLGINPFDQPGVEAYKKNMFALLGKPGYEDMKDELEKRL.

Glu291 acts as the Proton donor in catalysis. Residues His312 and Lys426 contribute to the active site.

It belongs to the GPI family.

It is found in the cytoplasm. It carries out the reaction alpha-D-glucose 6-phosphate = beta-D-fructose 6-phosphate. The protein operates within carbohydrate biosynthesis; gluconeogenesis. Its pathway is carbohydrate degradation; glycolysis; D-glyceraldehyde 3-phosphate and glycerone phosphate from D-glucose: step 2/4. Its function is as follows. Catalyzes the reversible isomerization of glucose-6-phosphate to fructose-6-phosphate. This chain is Glucose-6-phosphate isomerase, found in Clostridium botulinum (strain Eklund 17B / Type B).